The following is a 22-amino-acid chain: Zinc metalloproteinase oxiagin (22 aa).

Residues 14-22 (CYIEFYVVV) form the Peptidase M12B domain.

This sequence belongs to the venom metalloproteinase (M12B) family. P-III subfamily. P-IIId sub-subfamily. In terms of assembly, heterotrimer; disulfide-linked. The heterotrimer consists of 1 metalloproteinase chain and 2 lectin chains. Requires Zn(2+) as cofactor. Post-translationally, N-glycosylated. Expressed by the venom gland.

It localises to the secreted. Snake venom metalloproteinase that inhibits the classical complement pathway dose-dependently. It acts by binding to carbohydrates of IgG within the antibody-sensitized sheep erythrocytes (EA) complex, and thus prevents interaction of component C2 with immobilized C4b. Also induces cation-independent hemagglutination that can be prevented by D-galactose pretreatment. The sequence is that of Zinc metalloproteinase oxiagin from Naja oxiana (Central Asian cobra).